The following is a 1061-amino-acid chain: E3 SUMO-protein ligase ZNF451 (1061 aa).

Residues 1–38 (MGDPGSEIIESVPPAGPEASESTTDENEDDIQFVSEGP) form a disordered region. The sufficient for E3 SUMO-protein ligase activity stretch occupies residues 1–246 (MGDPGSEIIE…TDDGHNNNLL (246 aa)). The tract at residues 1-344 (MGDPGSEIIE…RVHCRNAGPV (344 aa)) is important for interaction with SUMO1 and SUMO2. The interaction with SUMO2 1 stretch occupies residues 30-37 (DIQFVSEG). Residues 38–41 (PLRP) carry the PLRP motif. An interaction with SUMO2 2 region spans residues 42-50 (VLEYIDLVS). Glycyl lysine isopeptide (Lys-Gly) (interchain with G-Cter in SUMO2) cross-links involve residues Lys-75, Lys-77, Lys-106, Ile-121, Ala-130, Leu-138, Lys-139, Lys-144, and Lys-153. Ser-155 bears the Phosphoserine mark. Arg-158 bears the Omega-N-methylarginine mark. Glycyl lysine isopeptide (Lys-Gly) (interchain with G-Cter in SUMO2) cross-links involve residues Val-164 and Lys-167. Residues 168 to 525 (PILCPIMHCN…HMSRIHGGAH (358 aa)) form an important for interaction with SMAD4 region. The C2H2-type 1 zinc-finger motif lies at 169-195 (ILCPIMHCNKEFDNGHLLLGHLKRFDH). Glycyl lysine isopeptide (Lys-Gly) (interchain with G-Cter in SUMO2) cross-links involve residues Gln-226, Gly-240, Pro-247, Ser-263, Lys-270, Lys-275, Lys-283, Asp-286, Lys-288, Pro-293, Lys-301, and Lys-309. The segment at 253–277 (FACPNCFLLFSRKEECSKHMSGKNH) adopts a C2H2-type 2 zinc-finger fold. The C2H2-type 3 zinc finger occupies 315 to 337 (VKCVACHKTLRSHMELTAHFRVH). Lys-357 is covalently cross-linked (Glycyl lysine isopeptide (Lys-Gly) (interchain with G-Cter in SUMO2)). The segment at 362–386 (GYCPDCNQVFVDETSTQNHKQNSGH) adopts a C2H2-type 4 zinc-finger fold. Lys-423 participates in a covalent cross-link: Glycyl lysine isopeptide (Lys-Gly) (interchain with G-Cter in SUMO2). The residue at position 432 (Ser-432) is a Phosphoserine. Residues Lys-434, Lys-446, Lys-452, Lys-454, Lys-464, Phe-473, Val-490, Cys-500, Lys-505, Asp-508, Gly-522, Trp-532, Lys-543, and Lys-585 each participate in a glycyl lysine isopeptide (Lys-Gly) (interchain with G-Cter in SUMO2) cross-link. The C2H2-type 5 zinc-finger motif lies at 498–521 (YKCVVCGKVCDDSGVIRLHMSRIH). The C2H2-type 6 zinc-finger motif lies at 531–554 (FWCRTCKKELTRKDTIMAHVTEFH). Residues 606-631 (WQCRICEDMFDSQEYVKQHCMSLASH) form a C2H2-type 7; atypical zinc finger. Glycyl lysine isopeptide (Lys-Gly) (interchain with G-Cter in SUMO2) cross-links involve residues Lys-632, Lys-647, and Lys-664. The segment at 636–659 (YSCAHCRKPFHKIETLYRHCQDEH) adopts a C2H2-type 8 zinc-finger fold. The C2H2-type 9 zinc finger occupies 667 to 690 (YFCGLCDLIFNVEEAFLSHYEEHH). A Glycyl lysine isopeptide (Lys-Gly) (interchain with G-Cter in SUMO1); alternate cross-link involves residue Lys-706. Lys-706 participates in a covalent cross-link: Glycyl lysine isopeptide (Lys-Gly) (interchain with G-Cter in SUMO2); alternate. Glycyl lysine isopeptide (Lys-Gly) (interchain with G-Cter in SUMO2) cross-links involve residues Lys-731 and Lys-748. The C2H2-type 10 zinc finger occupies 753–776 (FRCSLCSATAQNLTDMNTHIHQVH). Glycyl lysine isopeptide (Lys-Gly) (interchain with G-Cter in SUMO2) cross-links involve residues Lys-777, Lys-779, Lys-790, Lys-817, Lys-827, Lys-832, Lys-843, Lys-845, Lys-852, Lys-951, Lys-992, and Lys-993. Residues 789-812 (IKCGTCTKAFHDPESAQQHFHRKH) form a C2H2-type 11 zinc finger. Residues 1050 to 1061 (LEEAIRRSLEEM) form an important for ubiquitin binding region.

This sequence belongs to the krueppel C2H2-type zinc-finger protein family. In terms of assembly, homooligomer. Interacts (via N-terminal region) with SUMO1. Interacts (via N-terminal region) with SUMO2. Interacts simultaneously with two SUMO2 chains. Identified in a complex with SUMO2 and UBE2I/UBC9, where one ZNF451 interacts with one UBE2I/UBC9 and two SUMO2 chains, one bound to the UBE2I/UBC9 active site and the other to another region of the same UBE2I/UBC9 molecule. Interacts (via C-terminus) with ubiquitin. Interacts (via N-terminal zinc-finger domains) with SMAD4 (via MH2 domain). Interacts with SMAD2 and SMAD3. Identified in a complex that contains at least ZNF451, SMAD2, SMAD3 and SMAD4. Interacts with EP300. Inhibits interaction between EP300 and the SMAD4 complex. Interacts with SIMC1. Sumoylated. Predominantly sumoylated on the N-terminal region that is important for interaction with SUMO1 and SUMO2. Sumoylation is important for localization in nuclear granules; desumoylation leads to diffuse nucleoplasmic location. Autosumoylated (in vitro). Sumoylation enhances E3 SUMO-protein ligase activity.

Its subcellular location is the nucleus. It is found in the PML body. The protein resides in the nucleoplasm. Its pathway is protein modification; protein sumoylation. Its function is as follows. E3 SUMO-protein ligase; has a preference for SUMO2 and SUMO3 and facilitates UBE2I/UBC9-mediated sumoylation of target proteins. Plays a role in protein SUMO2 modification in response to stress caused by DNA damage and by proteasome inhibitors (in vitro). Required for MCM4 sumoylation. Has no activity with SUMO1. Preferentially transfers an additional SUMO2 chain onto the SUMO2 consensus site 'Lys-11'. Negatively regulates transcriptional activation mediated by the SMAD4 complex in response to TGF-beta signaling. Inhibits EP300-mediated acetylation of histone H3 at 'Lys-9'. Plays a role in regulating the transcription of AR targets. In Homo sapiens (Human), this protein is E3 SUMO-protein ligase ZNF451 (ZNF451).